We begin with the raw amino-acid sequence, 85 residues long: Beta-insect depressant toxin BmKITb (85 aa).

The first 21 residues, 1–21 (MKLFLLLVISASMLIDGLVNA), serve as a signal peptide directing secretion. One can recognise an LCN-type CS-alpha/beta domain in the interval 22 to 82 (DGYIRGSNGC…TWKSESNTCG (61 aa)). 4 disulfides stabilise this stretch: Cys-31–Cys-81, Cys-35–Cys-56, Cys-42–Cys-63, and Cys-46–Cys-65. Gly-82 is subject to Glycine amide.

Expressed by the venom gland.

The protein resides in the secreted. Its function is as follows. Depressant insect beta-toxins cause a transient contraction paralysis followed by a slow flaccid paralysis. They bind voltage-independently at site-4 of sodium channels (Nav) and shift the voltage of activation toward more negative potentials thereby affecting sodium channel activation and promoting spontaneous and repetitive firing. However, this toxin has some characteristics of excitatory toxins such as bursts of activity after the membrane has been hyperpolarized. This toxin is active only on insects. In Olivierus martensii (Manchurian scorpion), this protein is Beta-insect depressant toxin BmKITb.